Consider the following 127-residue polypeptide: Aspartate 1-decarboxylase (127 aa).

The active-site Schiff-base intermediate with substrate; via pyruvic acid is the S25. S25 is subject to Pyruvic acid (Ser). T57 provides a ligand contact to substrate. Y58 serves as the catalytic Proton donor. 73 to 75 provides a ligand contact to substrate; the sequence is GAA.

It belongs to the PanD family. Heterooctamer of four alpha and four beta subunits. The cofactor is pyruvate. In terms of processing, is synthesized initially as an inactive proenzyme, which is activated by self-cleavage at a specific serine bond to produce a beta-subunit with a hydroxyl group at its C-terminus and an alpha-subunit with a pyruvoyl group at its N-terminus.

It localises to the cytoplasm. The catalysed reaction is L-aspartate + H(+) = beta-alanine + CO2. It participates in cofactor biosynthesis; (R)-pantothenate biosynthesis; beta-alanine from L-aspartate: step 1/1. In terms of biological role, catalyzes the pyruvoyl-dependent decarboxylation of aspartate to produce beta-alanine. This is Aspartate 1-decarboxylase from Halalkalibacterium halodurans (strain ATCC BAA-125 / DSM 18197 / FERM 7344 / JCM 9153 / C-125) (Bacillus halodurans).